A 205-amino-acid chain; its full sequence is Transcription antitermination protein NusB (205 aa).

Belongs to the NusB family.

Involved in transcription antitermination. Required for transcription of ribosomal RNA (rRNA) genes. Binds specifically to the boxA antiterminator sequence of the ribosomal RNA (rrn) operons. The protein is Transcription antitermination protein NusB of Acaryochloris marina (strain MBIC 11017).